The chain runs to 1017 residues: Protein translocase subunit SecA 1 (1017 aa).

ATP-binding positions include Gln-143, 161-165 (GEGKT), and Asp-661. The interval 978–999 (GLNDDDEPLPAQPITTEQKPGR) is disordered. Zn(2+) contacts are provided by Cys-1003, Cys-1005, Cys-1014, and Cys-1015.

The protein belongs to the SecA family. In terms of assembly, monomer and homodimer. Part of the essential Sec protein translocation apparatus which comprises SecA, SecYEG and auxiliary proteins SecDF. Other proteins may also be involved. It depends on Zn(2+) as a cofactor.

Its subcellular location is the cell inner membrane. The protein resides in the cytoplasm. The catalysed reaction is ATP + H2O + cellular proteinSide 1 = ADP + phosphate + cellular proteinSide 2.. In terms of biological role, part of the Sec protein translocase complex. Interacts with the SecYEG preprotein conducting channel. Has a central role in coupling the hydrolysis of ATP to the transfer of proteins into and across the cell membrane, serving as an ATP-driven molecular motor driving the stepwise translocation of polypeptide chains across the membrane. The protein is Protein translocase subunit SecA 1 of Chlorobium chlorochromatii (strain CaD3).